A 249-amino-acid polypeptide reads, in one-letter code: Type III pantothenate kinase (249 aa).

6–13 contributes to the ATP binding site; the sequence is DVGNTHTT. 101–104 provides a ligand contact to substrate; sequence GADR. Asp103 acts as the Proton acceptor in catalysis. Residue Asp123 participates in K(+) binding. Thr126 contacts ATP. Thr177 lines the substrate pocket.

This sequence belongs to the type III pantothenate kinase family. As to quaternary structure, homodimer. NH4(+) serves as cofactor. It depends on K(+) as a cofactor.

It is found in the cytoplasm. The enzyme catalyses (R)-pantothenate + ATP = (R)-4'-phosphopantothenate + ADP + H(+). The protein operates within cofactor biosynthesis; coenzyme A biosynthesis; CoA from (R)-pantothenate: step 1/5. Catalyzes the phosphorylation of pantothenate (Pan), the first step in CoA biosynthesis. This is Type III pantothenate kinase from Thermosipho africanus (strain TCF52B).